Here is a 234-residue protein sequence, read N- to C-terminus: Triosephosphate isomerase (234 aa).

A substrate-binding site is contributed by 8 to 10 (NFK). H90 functions as the Electrophile in the catalytic mechanism. E159 (proton acceptor) is an active-site residue. G165 and S197 together coordinate substrate.

This sequence belongs to the triosephosphate isomerase family. Homodimer.

It localises to the cytoplasm. It catalyses the reaction D-glyceraldehyde 3-phosphate = dihydroxyacetone phosphate. It participates in carbohydrate biosynthesis; gluconeogenesis. The protein operates within carbohydrate degradation; glycolysis; D-glyceraldehyde 3-phosphate from glycerone phosphate: step 1/1. In terms of biological role, involved in the gluconeogenesis. Catalyzes stereospecifically the conversion of dihydroxyacetone phosphate (DHAP) to D-glyceraldehyde-3-phosphate (G3P). The polypeptide is Triosephosphate isomerase (Helicobacter pylori (strain P12)).